The chain runs to 250 residues: 5-oxoprolinase subunit A (250 aa).

This sequence belongs to the LamB/PxpA family. Forms a complex composed of PxpA, PxpB and PxpC.

The catalysed reaction is 5-oxo-L-proline + ATP + 2 H2O = L-glutamate + ADP + phosphate + H(+). Its function is as follows. Catalyzes the cleavage of 5-oxoproline to form L-glutamate coupled to the hydrolysis of ATP to ADP and inorganic phosphate. The polypeptide is 5-oxoprolinase subunit A (Streptomyces griseus subsp. griseus (strain JCM 4626 / CBS 651.72 / NBRC 13350 / KCC S-0626 / ISP 5235)).